Consider the following 272-residue polypeptide: uncharacterized protein (272 aa).

A signal peptide spans 1 to 20; it reads MKLRKIFLLPLISLSTLSVA. The N-palmitoyl cysteine moiety is linked to residue cysteine 21. Cysteine 21 carries the S-diacylglycerol cysteine lipid modification.

It belongs to the MG439/MG440 family.

It is found in the cell membrane. This is an uncharacterized protein from Mycoplasma genitalium (strain ATCC 33530 / DSM 19775 / NCTC 10195 / G37) (Mycoplasmoides genitalium).